The primary structure comprises 24 residues: Iron-regulated 31 kDa protein (24 aa).

The protein localises to the periplasm. In terms of biological role, may be involved in iron uptake. The polypeptide is Iron-regulated 31 kDa protein (Haemophilus influenzae).